The chain runs to 119 residues: Ribonuclease P protein component (119 aa).

It belongs to the RnpA family. As to quaternary structure, consists of a catalytic RNA component (M1 or rnpB) and a protein subunit.

The enzyme catalyses Endonucleolytic cleavage of RNA, removing 5'-extranucleotides from tRNA precursor.. RNaseP catalyzes the removal of the 5'-leader sequence from pre-tRNA to produce the mature 5'-terminus. It can also cleave other RNA substrates such as 4.5S RNA. The protein component plays an auxiliary but essential role in vivo by binding to the 5'-leader sequence and broadening the substrate specificity of the ribozyme. This is Ribonuclease P protein component from Yersinia enterocolitica serotype O:8 / biotype 1B (strain NCTC 13174 / 8081).